A 267-amino-acid polypeptide reads, in one-letter code: Undecaprenyl-diphosphatase (267 aa).

A run of 7 helical transmembrane segments spans residues 4–24 (LYALILGIIEGLTEFLPISST), 41–61 (FWKSFLIIIQLGSILAVIFVF), 69–89 (LDIWLKLAVGFFPTGVIGLFV), 96–116 (LFNGWVVVGMLIFGGVVFILI), 173–193 (AAEFSFLLAIPTMIIATAYSI), 207–227 (IPLGIGFITAFIVAVLVIKFF), and 239–259 (FGIYRIILGFVFFYLYYSGIL).

It belongs to the UppP family.

Its subcellular location is the cell inner membrane. The catalysed reaction is di-trans,octa-cis-undecaprenyl diphosphate + H2O = di-trans,octa-cis-undecaprenyl phosphate + phosphate + H(+). Functionally, catalyzes the dephosphorylation of undecaprenyl diphosphate (UPP). Confers resistance to bacitracin. The polypeptide is Undecaprenyl-diphosphatase (Campylobacter jejuni subsp. jejuni serotype O:23/36 (strain 81-176)).